The following is a 131-amino-acid chain: Torsin-1A-interacting protein 2, isoform IFRG15 (131 aa).

The sequence is that of Torsin-1A-interacting protein 2, isoform IFRG15 (Tor1aip2) from Mus musculus (Mouse).